A 355-amino-acid polypeptide reads, in one-letter code: tRNA uridine(34) hydroxylase (355 aa).

The 95-residue stretch at 146–240 (DDPDTLFVDM…YARKAKEQGL (95 aa)) folds into the Rhodanese domain. The active-site Cysteine persulfide intermediate is cysteine 200. The interval 333–355 (NKSKGLLQATMHIPSPEKSADEK) is disordered.

It belongs to the TrhO family.

It carries out the reaction uridine(34) in tRNA + AH2 + O2 = 5-hydroxyuridine(34) in tRNA + A + H2O. Functionally, catalyzes oxygen-dependent 5-hydroxyuridine (ho5U) modification at position 34 in tRNAs. In Yersinia pseudotuberculosis serotype O:1b (strain IP 31758), this protein is tRNA uridine(34) hydroxylase.